Consider the following 324-residue polypeptide: tRNA dimethylallyltransferase (324 aa).

17–24 (GPTASGKT) contacts ATP. Residue 19 to 24 (TASGKT) participates in substrate binding. Interaction with substrate tRNA regions lie at residues 42–45 (DSAL), 166–170 (QRIQR), and 251–256 (RCVGYR).

The protein belongs to the IPP transferase family. In terms of assembly, monomer. Requires Mg(2+) as cofactor.

The enzyme catalyses adenosine(37) in tRNA + dimethylallyl diphosphate = N(6)-dimethylallyladenosine(37) in tRNA + diphosphate. Functionally, catalyzes the transfer of a dimethylallyl group onto the adenine at position 37 in tRNAs that read codons beginning with uridine, leading to the formation of N6-(dimethylallyl)adenosine (i(6)A). This is tRNA dimethylallyltransferase from Burkholderia pseudomallei (strain 668).